A 396-amino-acid chain; its full sequence is Pectinesterase (396 aa).

Residues Met1–Ala26 form the signal peptide. Residue Thr174 coordinates substrate. The active-site Proton donor is Asp232. The active-site Nucleophile is the Asp259. The substrate site is built by Arg324 and Trp326.

The protein belongs to the pectinesterase family.

The protein resides in the secreted. It catalyses the reaction [(1-&gt;4)-alpha-D-galacturonosyl methyl ester](n) + n H2O = [(1-&gt;4)-alpha-D-galacturonosyl](n) + n methanol + n H(+). It participates in glycan metabolism; pectin degradation; 2-dehydro-3-deoxy-D-gluconate from pectin: step 1/5. In terms of biological role, involved in maceration and soft-rotting of plant tissue. This chain is Pectinesterase (pme), found in Ralstonia solanacearum (Pseudomonas solanacearum).